The following is a 463-amino-acid chain: tRNA modification GTPase MnmE (463 aa).

Positions 29, 91, and 130 each coordinate (6S)-5-formyl-5,6,7,8-tetrahydrofolate. A TrmE-type G domain is found at 225 to 384 (GLKVAIVGRP…LETAILEIVQ (160 aa)). Asn-235 lines the K(+) pocket. GTP is bound by residues 235–240 (NVGKSS), 254–260 (TDLPGTT), and 279–282 (DTAG). Residue Ser-239 coordinates Mg(2+). Thr-254, Leu-256, and Thr-259 together coordinate K(+). Residue Thr-260 participates in Mg(2+) binding. Lys-463 lines the (6S)-5-formyl-5,6,7,8-tetrahydrofolate pocket.

The protein belongs to the TRAFAC class TrmE-Era-EngA-EngB-Septin-like GTPase superfamily. TrmE GTPase family. Homodimer. Heterotetramer of two MnmE and two MnmG subunits. K(+) is required as a cofactor.

Its subcellular location is the cytoplasm. In terms of biological role, exhibits a very high intrinsic GTPase hydrolysis rate. Involved in the addition of a carboxymethylaminomethyl (cmnm) group at the wobble position (U34) of certain tRNAs, forming tRNA-cmnm(5)s(2)U34. The chain is tRNA modification GTPase MnmE from Trichormus variabilis (strain ATCC 29413 / PCC 7937) (Anabaena variabilis).